Here is a 151-residue protein sequence, read N- to C-terminus: Glycosylation-dependent cell adhesion molecule 1 (151 aa).

Residues 1–19 form the signal peptide; sequence MKFFTVLLFVSLAATSLAL. The tract at residues 29–123 is disordered; it reads MKTQPTDAIP…ENLTKSSQTV (95 aa). The segment covering 42-52 has biased composition (low complexity); that stretch reads STPTSYTSEES. Residues 53–71 are compositionally biased toward basic and acidic residues; the sequence is TSSKDLSKEPSIFREELIS. Residues serine 54, serine 59, serine 63, and serine 71 each carry the phosphoserine modification. Positions 103–114 are enriched in low complexity; sequence RPTTSAATTSEE. Residue asparagine 115 is glycosylated (N-linked (GlcNAc...) asparagine).

The protein belongs to the PP3/GlyCAM-1 family. Post-translationally, extensively O-glycosylated. Lymph nodes. Associated with the lumenal surface of the high endothelial venules of peripheral lymph nodes.

It localises to the cell membrane. Adhesion molecule that accomplishes cell binding by presenting carbohydrate(s) to the lectin domain of L-selectin. In Mus musculus (Mouse), this protein is Glycosylation-dependent cell adhesion molecule 1 (Glycam1).